The sequence spans 185 residues: Bcl-2-modifying factor (185 aa).

Residues 1 to 28 (MEPPQCVEELEDDVFQSEDGEPGTQPGG) form a disordered region. Positions 8 to 21 (EELEDDVFQSEDGE) are enriched in acidic residues. The interaction with DLC2 stretch occupies residues 67–75 (DKATQTLSP). The BH3 signature appears at 134–148 (IARKLQCIADQFHRL).

The protein belongs to the Bcl-2 family. Interacts with MCL1, BCL2, BCL2L1/BCL-Xl, BCL2A1 and BCL2L2/BCL-w. Interacts with the myosin V actin motor complex through its binding to DLC2. Widely expressed with an abundant expression in pancreas, liver kidney and hematopoietic tissues.

May play a role in apoptosis. The protein is Bcl-2-modifying factor (Bmf) of Mus musculus (Mouse).